The primary structure comprises 154 residues: Aspartate carbamoyltransferase regulatory chain (154 aa).

Zn(2+)-binding residues include C109, C114, C138, and C141.

The protein belongs to the PyrI family. In terms of assembly, contains catalytic and regulatory chains. Zn(2+) serves as cofactor.

Its function is as follows. Involved in allosteric regulation of aspartate carbamoyltransferase. The protein is Aspartate carbamoyltransferase regulatory chain of Aeromonas hydrophila subsp. hydrophila (strain ATCC 7966 / DSM 30187 / BCRC 13018 / CCUG 14551 / JCM 1027 / KCTC 2358 / NCIMB 9240 / NCTC 8049).